The sequence spans 305 residues: UDP-3-O-acyl-N-acetylglucosamine deacetylase (305 aa).

Zn(2+) contacts are provided by His79, His238, and Asp242. Residue His265 is the Proton donor of the active site.

It belongs to the LpxC family. It depends on Zn(2+) as a cofactor.

The enzyme catalyses a UDP-3-O-[(3R)-3-hydroxyacyl]-N-acetyl-alpha-D-glucosamine + H2O = a UDP-3-O-[(3R)-3-hydroxyacyl]-alpha-D-glucosamine + acetate. The protein operates within glycolipid biosynthesis; lipid IV(A) biosynthesis; lipid IV(A) from (3R)-3-hydroxytetradecanoyl-[acyl-carrier-protein] and UDP-N-acetyl-alpha-D-glucosamine: step 2/6. Functionally, catalyzes the hydrolysis of UDP-3-O-myristoyl-N-acetylglucosamine to form UDP-3-O-myristoylglucosamine and acetate, the committed step in lipid A biosynthesis. In Haemophilus influenzae (strain PittGG), this protein is UDP-3-O-acyl-N-acetylglucosamine deacetylase.